A 79-amino-acid polypeptide reads, in one-letter code: Sulfur carrier protein TusA (79 aa).

Catalysis depends on C17, which acts as the Cysteine persulfide intermediate.

It belongs to the sulfur carrier protein TusA family.

The protein localises to the cytoplasm. In terms of biological role, sulfur carrier protein which probably makes part of a sulfur-relay system. This Haemophilus influenzae (strain ATCC 51907 / DSM 11121 / KW20 / Rd) protein is Sulfur carrier protein TusA.